The following is a 70-amino-acid chain: Conotoxin AbVIB (70 aa).

An N-terminal signal peptide occupies residues Val1–Ala17. The propeptide occupies Glu18–Arg41. Positions Ser20 to Arg41 are disordered. 3 disulfides stabilise this stretch: Cys43/Cys57, Cys50/Cys61, and Cys56/Cys68.

This sequence belongs to the conotoxin O1 superfamily. In terms of tissue distribution, expressed by the venom duct.

The protein localises to the secreted. In Conus abbreviatus (Abbreviated cone), this protein is Conotoxin AbVIB.